The primary structure comprises 361 residues: NAD(P)H-quinone oxidoreductase subunit 1, chloroplastic (361 aa).

Helical transmembrane passes span 25-45 (IWLL…VLVI), 102-122 (VAVV…HLVL), 125-145 (LSIG…GLLM), 246-266 (YSGI…LVSS), 298-318 (VFGT…FLFI), and 334-354 (LLNL…LLTT).

The protein belongs to the complex I subunit 1 family. As to quaternary structure, NDH is composed of at least 16 different subunits, 5 of which are encoded in the nucleus.

The protein localises to the plastid. The protein resides in the chloroplast thylakoid membrane. It carries out the reaction a plastoquinone + NADH + (n+1) H(+)(in) = a plastoquinol + NAD(+) + n H(+)(out). It catalyses the reaction a plastoquinone + NADPH + (n+1) H(+)(in) = a plastoquinol + NADP(+) + n H(+)(out). Functionally, NDH shuttles electrons from NAD(P)H:plastoquinone, via FMN and iron-sulfur (Fe-S) centers, to quinones in the photosynthetic chain and possibly in a chloroplast respiratory chain. The immediate electron acceptor for the enzyme in this species is believed to be plastoquinone. Couples the redox reaction to proton translocation, and thus conserves the redox energy in a proton gradient. This is NAD(P)H-quinone oxidoreductase subunit 1, chloroplastic from Nymphaea alba (White water-lily).